The primary structure comprises 103 residues: Zinc-containing ferredoxin (103 aa).

An N-terminal extension region spans residues 1–36 (GIDPNYRTSKPVVGDHSGHKIYGPVESPKVLGVHGT). His19 contributes to the Zn(2+) binding site. Lys29 is modified (N6-methyllysine). A Zn(2+)-binding site is contributed by His34. 2 4Fe-4S ferredoxin-type domains span residues 35 to 65 (GTIV…WYET) and 74 to 103 (KADP…VKPP). The [3Fe-4S] cluster site is built by Cys45 and Cys51. Residue Cys55 coordinates [4Fe-4S] cluster. Asp76 is a binding site for Zn(2+). Cys83, Cys86, and Cys89 together coordinate [4Fe-4S] cluster. Cys93 provides a ligand contact to [3Fe-4S] cluster.

[3Fe-4S] cluster serves as cofactor. It depends on [4Fe-4S] cluster as a cofactor. Zn(2+) is required as a cofactor.

Ferredoxins are iron-sulfur proteins that transfer electrons in a wide variety of metabolic reactions. The sequence is that of Zinc-containing ferredoxin (zfx) from Sulfolobus acidocaldarius (strain ATCC 33909 / DSM 639 / JCM 8929 / NBRC 15157 / NCIMB 11770).